We begin with the raw amino-acid sequence, 316 residues long: CRISPR-associated endonuclease Cas1 (316 aa).

Mn(2+) is bound by residues Glu-143, His-206, and Glu-221.

This sequence belongs to the CRISPR-associated endonuclease Cas1 family. In terms of assembly, homodimer, forms a heterotetramer with a Cas2 homodimer. It depends on Mg(2+) as a cofactor. Mn(2+) serves as cofactor.

Functionally, CRISPR (clustered regularly interspaced short palindromic repeat), is an adaptive immune system that provides protection against mobile genetic elements (viruses, transposable elements and conjugative plasmids). CRISPR clusters contain spacers, sequences complementary to antecedent mobile elements, and target invading nucleic acids. CRISPR clusters are transcribed and processed into CRISPR RNA (crRNA). Acts as a dsDNA endonuclease. Involved in the integration of spacer DNA into the CRISPR cassette. This Aquifex aeolicus (strain VF5) protein is CRISPR-associated endonuclease Cas1.